Consider the following 359-residue polypeptide: Homoserine dehydrogenase (359 aa).

Residues Ala-13, Val-15, Val-16, and Ala-41 each coordinate NAD(+). Val-16 is a binding site for NADP(+). An NADPH-binding site is contributed by Val-16. The NADPH site is built by Lys-60, Thr-93, Ser-94, and Lys-117. Thr-93 lines the NAD(+) pocket. An NADP(+)-binding site is contributed by Thr-93. Lys-117 provides a ligand contact to NADP(+). Na(+) contacts are provided by Glu-143, Val-146, Ala-148, and Leu-150. NADP(+) contacts are provided by Gly-205 and Glu-208. Residues Glu-208 and Asp-219 each contribute to the L-homoserine site. The Proton donor role is filled by Lys-223. Residue Lys-290 forms a Glycyl lysine isopeptide (Lys-Gly) (interchain with G-Cter in ubiquitin) linkage. Position 340 (Gly-340) interacts with NAD(+). Gly-340 is a binding site for NADP(+). Residue Gly-340 coordinates NADPH.

It belongs to the homoserine dehydrogenase family. As to quaternary structure, homodimer. A metal cation serves as cofactor.

It carries out the reaction L-homoserine + NADP(+) = L-aspartate 4-semialdehyde + NADPH + H(+). The enzyme catalyses L-homoserine + NAD(+) = L-aspartate 4-semialdehyde + NADH + H(+). Its pathway is amino-acid biosynthesis; L-methionine biosynthesis via de novo pathway; L-homoserine from L-aspartate: step 3/3. It participates in amino-acid biosynthesis; L-threonine biosynthesis; L-threonine from L-aspartate: step 3/5. In terms of biological role, catalyzes the conversion of L-aspartate-beta-semialdehyde (L-Asa) to L-homoserine (L-Hse), the third step in the biosynthesis of amino acids that derive from aspartate (the aspartate family of amino acids), including methioinine and threonine, the latter of which is a precursor to isoleucine; production of homoserine leads to a branch-point in the pathway as it can either be O-phosphorylated for processing to threonine, or O-acylated for processing to methionine. This chain is Homoserine dehydrogenase (HOM6), found in Saccharomyces cerevisiae (strain ATCC 204508 / S288c) (Baker's yeast).